A 224-amino-acid polypeptide reads, in one-letter code: ATP synthase subunit a (224 aa).

6 consecutive transmembrane segments (helical) span residues 17–37 (LSLNWLSTFLGLLMIPSIYWL), 72–92 (IFISLFSLILFNNFMGLFPYI), 99–119 (LTLTLSLALPLWLCFMLYGWI), 125–145 (MFAHLVPQGTPAVLMPFMVCI), 170–190 (LLLTLLGNTGPSMSYLLVTFL), and 195–215 (IALLVLESAVAMIQSYVFAVL).

This sequence belongs to the ATPase A chain family. In terms of assembly, F-type ATPases have 2 components, CF(1) - the catalytic core - and CF(0) - the membrane proton channel. CF(1) has five subunits: alpha(3), beta(3), gamma(1), delta(1), epsilon(1). CF(0) has three main subunits: a, b and c.

The protein localises to the mitochondrion inner membrane. Functionally, mitochondrial membrane ATP synthase (F(1)F(0) ATP synthase or Complex V) produces ATP from ADP in the presence of a proton gradient across the membrane which is generated by electron transport complexes of the respiratory chain. F-type ATPases consist of two structural domains, F(1) - containing the extramembraneous catalytic core and F(0) - containing the membrane proton channel, linked together by a central stalk and a peripheral stalk. During catalysis, ATP synthesis in the catalytic domain of F(1) is coupled via a rotary mechanism of the central stalk subunits to proton translocation. Key component of the proton channel; it may play a direct role in the translocation of protons across the membrane. This Drosophila mauritiana (Fruit fly) protein is ATP synthase subunit a (mt:ATPase6).